Consider the following 436-residue polypeptide: GTPase Der (436 aa).

2 EngA-type G domains span residues 4-167 (PTVA…PVEE) and 175-351 (IRFS…ESQN). GTP-binding positions include 10 to 17 (GRPNVGKS), 57 to 61 (DTGGI), 119 to 122 (NKVD), 181 to 188 (GRPNVGKS), 229 to 233 (DTAGM), and 294 to 297 (NKWD). One can recognise a KH-like domain in the interval 352–436 (KRIPSAVLND…PIHLIARKRK (85 aa)).

The protein belongs to the TRAFAC class TrmE-Era-EngA-EngB-Septin-like GTPase superfamily. EngA (Der) GTPase family. In terms of assembly, associates with the 50S ribosomal subunit.

Its function is as follows. GTPase that plays an essential role in the late steps of ribosome biogenesis. In Streptococcus pyogenes serotype M2 (strain MGAS10270), this protein is GTPase Der.